Here is a 419-residue protein sequence, read N- to C-terminus: Gamma-glutamyl phosphate reductase (419 aa).

Belongs to the gamma-glutamyl phosphate reductase family.

It is found in the cytoplasm. It carries out the reaction L-glutamate 5-semialdehyde + phosphate + NADP(+) = L-glutamyl 5-phosphate + NADPH + H(+). Its pathway is amino-acid biosynthesis; L-proline biosynthesis; L-glutamate 5-semialdehyde from L-glutamate: step 2/2. Catalyzes the NADPH-dependent reduction of L-glutamate 5-phosphate into L-glutamate 5-semialdehyde and phosphate. The product spontaneously undergoes cyclization to form 1-pyrroline-5-carboxylate. This chain is Gamma-glutamyl phosphate reductase, found in Nitratidesulfovibrio vulgaris (strain DP4) (Desulfovibrio vulgaris).